A 375-amino-acid polypeptide reads, in one-letter code: Probable pectin lyase B (375 aa).

The first 19 residues, 1–19 (MKYAAFLPTIGALVSQAIA), serve as a signal peptide directing secretion. 2 disulfides stabilise this stretch: C82/C101 and C91/C225. N128 carries an N-linked (GlcNAc...) asparagine glycan. R255 is a catalytic residue. C321 and C329 form a disulfide bridge.

The protein belongs to the polysaccharide lyase 1 family.

The protein resides in the secreted. It carries out the reaction Eliminative cleavage of (1-&gt;4)-alpha-D-galacturonan methyl ester to give oligosaccharides with 4-deoxy-6-O-methyl-alpha-D-galact-4-enuronosyl groups at their non-reducing ends.. In terms of biological role, pectinolytic enzymes consist of four classes of enzymes: pectin lyase, polygalacturonase, pectin methylesterase and rhamnogalacturonase. Among pectinolytic enzymes, pectin lyase is the most important in depolymerization of pectin, since it cleaves internal glycosidic bonds of highly methylated pectins. In Aspergillus fumigatus (strain CBS 144.89 / FGSC A1163 / CEA10) (Neosartorya fumigata), this protein is Probable pectin lyase B (pelB).